A 77-amino-acid polypeptide reads, in one-letter code: Putative neurotoxin 3 (77 aa).

An N-terminal signal peptide occupies residues methionine 1–alanine 25. The propeptide occupies lysine 26–lysine 46.

This sequence belongs to the scolopendra neurotoxin 3 family. Post-translationally, contains 2 disulfide bonds. Expressed by the venom gland.

It is found in the secreted. In Scolopendra mutilans (Chinese red-headed centipede), this protein is Putative neurotoxin 3.